The following is a 256-amino-acid chain: Imidazole glycerol phosphate synthase subunit hisF1 (256 aa).

Residues Asp-12 and Asp-131 contribute to the active site.

It belongs to the HisA/HisF family. In terms of assembly, heterodimer of HisH and HisF.

It is found in the cytoplasm. It catalyses the reaction 5-[(5-phospho-1-deoxy-D-ribulos-1-ylimino)methylamino]-1-(5-phospho-beta-D-ribosyl)imidazole-4-carboxamide + L-glutamine = D-erythro-1-(imidazol-4-yl)glycerol 3-phosphate + 5-amino-1-(5-phospho-beta-D-ribosyl)imidazole-4-carboxamide + L-glutamate + H(+). The protein operates within amino-acid biosynthesis; L-histidine biosynthesis; L-histidine from 5-phospho-alpha-D-ribose 1-diphosphate: step 5/9. In terms of biological role, IGPS catalyzes the conversion of PRFAR and glutamine to IGP, AICAR and glutamate. The HisF subunit catalyzes the cyclization activity that produces IGP and AICAR from PRFAR using the ammonia provided by the HisH subunit. The chain is Imidazole glycerol phosphate synthase subunit hisF1 (hisF1) from Pseudomonas aeruginosa (strain ATCC 15692 / DSM 22644 / CIP 104116 / JCM 14847 / LMG 12228 / 1C / PRS 101 / PAO1).